The following is a 217-amino-acid chain: RING-H2 finger protein ATL40 (217 aa).

A helical membrane pass occupies residues 28–48; that stretch reads IFLVTTVSFSIIIIIVFVYYL. An RING-type; atypical zinc finger spans residues 100-142; it reads CAVCLSLLEEKDNARMLPNCKHVFHVSCVDTWLTTQSTCPVCR. Composition is skewed to basic and acidic residues over residues 143 to 160 and 186 to 217; these read TEAE…REGP and DSFR…IERQ. The tract at residues 143 to 217 is disordered; the sequence is TEAEPSHPRL…QDRELDIERQ (75 aa).

It belongs to the RING-type zinc finger family. ATL subfamily.

The protein resides in the membrane. It carries out the reaction S-ubiquitinyl-[E2 ubiquitin-conjugating enzyme]-L-cysteine + [acceptor protein]-L-lysine = [E2 ubiquitin-conjugating enzyme]-L-cysteine + N(6)-ubiquitinyl-[acceptor protein]-L-lysine.. Its pathway is protein modification; protein ubiquitination. This chain is RING-H2 finger protein ATL40 (ATL40), found in Arabidopsis thaliana (Mouse-ear cress).